Here is a 141-residue protein sequence, read N- to C-terminus: Nucleoside diphosphate kinase (141 aa).

6 residues coordinate ATP: Lys-11, Phe-59, Arg-87, Thr-93, Arg-104, and Asn-114. The active-site Pros-phosphohistidine intermediate is the His-117.

This sequence belongs to the NDK family. Homotetramer. Mg(2+) is required as a cofactor.

Its subcellular location is the cytoplasm. It carries out the reaction a 2'-deoxyribonucleoside 5'-diphosphate + ATP = a 2'-deoxyribonucleoside 5'-triphosphate + ADP. The enzyme catalyses a ribonucleoside 5'-diphosphate + ATP = a ribonucleoside 5'-triphosphate + ADP. Major role in the synthesis of nucleoside triphosphates other than ATP. The ATP gamma phosphate is transferred to the NDP beta phosphate via a ping-pong mechanism, using a phosphorylated active-site intermediate. The chain is Nucleoside diphosphate kinase from Laribacter hongkongensis (strain HLHK9).